Reading from the N-terminus, the 612-residue chain is Cyclin-dependent kinase G1 (612 aa).

The segment covering 26–54 (SRDVYVRQSGRDDERRQIKRPSDHDLRRN) has biased composition (basic and acidic residues). 2 disordered regions span residues 26–60 (SRDV…RHRS) and 239–278 (CYSS…EDQD). The region spanning 297 to 593 (FQKLNKINEG…VEDALNHGWF (297 aa)) is the Protein kinase domain. Residues 303-311 (INEGTYGIV) and Lys-326 contribute to the ATP site. At Tyr-308 the chain carries Phosphotyrosine. The Proton acceptor role is filled by Asp-426. Ser-453 bears the Phosphoserine mark. Phosphothreonine is present on Thr-459.

Belongs to the protein kinase superfamily. Ser/Thr protein kinase family. Forms a complex with CYCL1-1. Associated with the spliceosome. Interacts with RS2Z33. As to expression, expressed in leaves and inflorescences. Lower levels of expression in roots and stems.

The protein localises to the nucleus speckle. It carries out the reaction L-seryl-[protein] + ATP = O-phospho-L-seryl-[protein] + ADP + H(+). The catalysed reaction is L-threonyl-[protein] + ATP = O-phospho-L-threonyl-[protein] + ADP + H(+). Functionally, cyclin-dependent kinase involved in pre-mRNA splicing. Required for the correct splicing of the sixth intron of CALS5 pre-mRNA. May stabilize the binding of U1 snRNP to this rare type of intron with a GC 5'SS. Involved in chromosome pairing and is required for the completion of synapsis in male meiocytes at high ambient temperatures. The sequence is that of Cyclin-dependent kinase G1 (CDKG1) from Arabidopsis thaliana (Mouse-ear cress).